The following is a 184-amino-acid chain: Signal peptidase complex subunit 3 (184 aa).

Over 1–14 the chain is Cytoplasmic; that stretch reads MFSFVQRFQNVSNQ. The chain crosses the membrane as a helical; Signal-anchor for type II membrane protein span at residues 15 to 35; that stretch reads AFSMGIVMVVFIMASSYYQLI. Residues 36 to 184 lie on the Lumenal side of the membrane; that stretch reads NNNAFSVPSN…TLTVENKNKV (149 aa). N-linked (GlcNAc...) asparagine glycosylation is found at Asn102 and Asn173.

It belongs to the SPCS3 family. In terms of assembly, component of the signal peptidase complex (SPC) composed of a catalytic subunit SEC11 and three accessory subunits SPC1, SPC2 and SPC3. The complex induces a local thinning of the ER membrane which is used to measure the length of the signal peptide (SP) h-region of protein substrates. This ensures the selectivity of the complex towards h-regions shorter than 18-20 amino acids. Interacts with SEC11. SPC associates with the translocon complex.

The protein resides in the endoplasmic reticulum membrane. Essential component of the signal peptidase complex (SPC) which catalyzes the cleavage of N-terminal signal sequences from nascent proteins as they are translocated into the lumen of the endoplasmic reticulum. Essential for the SPC catalytic activity, possibly by stabilizing and positioning the active center of the complex close to the lumenal surface. Essential for viability. This Saccharomyces cerevisiae (strain ATCC 204508 / S288c) (Baker's yeast) protein is Signal peptidase complex subunit 3 (SPC3).